Here is a 381-residue protein sequence, read N- to C-terminus: Succinyl-diaminopimelate desuccinylase (381 aa).

A Zn(2+)-binding site is contributed by H69. D71 is an active-site residue. Residue D103 coordinates Zn(2+). E137 functions as the Proton acceptor in the catalytic mechanism. Zn(2+) contacts are provided by E138, E166, and H355.

The protein belongs to the peptidase M20A family. DapE subfamily. In terms of assembly, homodimer. Zn(2+) is required as a cofactor. Requires Co(2+) as cofactor.

The catalysed reaction is N-succinyl-(2S,6S)-2,6-diaminopimelate + H2O = (2S,6S)-2,6-diaminopimelate + succinate. It functions in the pathway amino-acid biosynthesis; L-lysine biosynthesis via DAP pathway; LL-2,6-diaminopimelate from (S)-tetrahydrodipicolinate (succinylase route): step 3/3. In terms of biological role, catalyzes the hydrolysis of N-succinyl-L,L-diaminopimelic acid (SDAP), forming succinate and LL-2,6-diaminopimelate (DAP), an intermediate involved in the bacterial biosynthesis of lysine and meso-diaminopimelic acid, an essential component of bacterial cell walls. The polypeptide is Succinyl-diaminopimelate desuccinylase (Rickettsia africae (strain ESF-5)).